The primary structure comprises 480 residues: Aspartyl/glutamyl-tRNA(Asn/Gln) amidotransferase subunit B (480 aa).

Belongs to the GatB/GatE family. GatB subfamily. In terms of assembly, heterotrimer of A, B and C subunits.

The enzyme catalyses L-glutamyl-tRNA(Gln) + L-glutamine + ATP + H2O = L-glutaminyl-tRNA(Gln) + L-glutamate + ADP + phosphate + H(+). It catalyses the reaction L-aspartyl-tRNA(Asn) + L-glutamine + ATP + H2O = L-asparaginyl-tRNA(Asn) + L-glutamate + ADP + phosphate + 2 H(+). Functionally, allows the formation of correctly charged Asn-tRNA(Asn) or Gln-tRNA(Gln) through the transamidation of misacylated Asp-tRNA(Asn) or Glu-tRNA(Gln) in organisms which lack either or both of asparaginyl-tRNA or glutaminyl-tRNA synthetases. The reaction takes place in the presence of glutamine and ATP through an activated phospho-Asp-tRNA(Asn) or phospho-Glu-tRNA(Gln). The sequence is that of Aspartyl/glutamyl-tRNA(Asn/Gln) amidotransferase subunit B from Streptococcus thermophilus (strain ATCC BAA-250 / LMG 18311).